The chain runs to 318 residues: Protein disulfide-isomerase MPD1 (318 aa).

Residues 1–21 form the signal peptide; sequence MLFLNIIKLLLGLFIMNEVKA. A Thioredoxin domain is found at 22 to 158; sequence QNFYDSDPHI…SLSRIRSYVK (137 aa). An N-linked (GlcNAc...) asparagine glycan is attached at N47. C59 and C62 are joined by a disulfide. The N-linked (GlcNAc...) asparagine glycan is linked to N307. The short motif at 315–318 is the Prevents secretion from ER element; it reads HDEL.

Belongs to the protein disulfide isomerase family. In terms of assembly, interacts with CNE1 and EPS1.

The protein resides in the endoplasmic reticulum lumen. The catalysed reaction is Catalyzes the rearrangement of -S-S- bonds in proteins.. Functionally, participates in the folding of proteins containing disulfide bonds. This Saccharomyces cerevisiae (strain ATCC 204508 / S288c) (Baker's yeast) protein is Protein disulfide-isomerase MPD1 (MPD1).